The sequence spans 293 residues: ATP synthase gamma chain (293 aa).

Belongs to the ATPase gamma chain family. In terms of assembly, F-type ATPases have 2 components, CF(1) - the catalytic core - and CF(0) - the membrane proton channel. CF(1) has five subunits: alpha(3), beta(3), gamma(1), delta(1), epsilon(1). CF(0) has three main subunits: a, b and c.

It localises to the cell inner membrane. Its function is as follows. Produces ATP from ADP in the presence of a proton gradient across the membrane. The gamma chain is believed to be important in regulating ATPase activity and the flow of protons through the CF(0) complex. This chain is ATP synthase gamma chain, found in Allorhizobium ampelinum (strain ATCC BAA-846 / DSM 112012 / S4) (Agrobacterium vitis (strain S4)).